Reading from the N-terminus, the 151-residue chain is Large-conductance mechanosensitive channel (151 aa).

The next 2 membrane-spanning stretches (helical) occupy residues V19–L39 and G85–V105.

Belongs to the MscL family. Homopentamer.

The protein localises to the cell inner membrane. Channel that opens in response to stretch forces in the membrane lipid bilayer. May participate in the regulation of osmotic pressure changes within the cell. This is Large-conductance mechanosensitive channel from Chlorobaculum parvum (strain DSM 263 / NCIMB 8327) (Chlorobium vibrioforme subsp. thiosulfatophilum).